Here is a 741-residue protein sequence, read N- to C-terminus: Eukaryotic translation initiation factor 3 subunit B (741 aa).

Polar residues predominate over residues 1-10 (MAPSFDTLSE). Residues 1–21 (MAPSFDTLSEQDLHEEEEEEI) are disordered. Residues 40-126 (TFIVIDGLPI…HTLAVNKLMD (87 aa)) form the RRM domain. WD repeat units lie at residues 193-230 (AHWT…KQKQ), 232-289 (PHPF…RSFV), 303-344 (APKK…LLGK), 514-557 (IEKK…EKAE), and 572-610 (VEHY…HTFA). The interval 696 to 723 (DAYGIPEDADDAKVAKDAPPVSEDQGEA) is disordered.

This sequence belongs to the eIF-3 subunit B family. Component of the eukaryotic translation initiation factor 3 (eIF-3) complex.

The protein localises to the cytoplasm. Functionally, RNA-binding component of the eukaryotic translation initiation factor 3 (eIF-3) complex, which is involved in protein synthesis of a specialized repertoire of mRNAs and, together with other initiation factors, stimulates binding of mRNA and methionyl-tRNAi to the 40S ribosome. The eIF-3 complex specifically targets and initiates translation of a subset of mRNAs involved in cell proliferation. The polypeptide is Eukaryotic translation initiation factor 3 subunit B (prt1) (Aspergillus oryzae (strain ATCC 42149 / RIB 40) (Yellow koji mold)).